Here is a 232-residue protein sequence, read N- to C-terminus: DnaJ homolog subfamily B member 8 (232 aa).

Positions 3-69 constitute a J domain; the sequence is NYYEVLGVQA…KKRSLYDRAG (67 aa).

In terms of assembly, interacts with histone deacetylases HDAC4, HDAC6, and SIRT2, HDAC activity is required for antiaggregation.

In terms of biological role, efficient suppressor of aggregation and toxicity of disease-associated polyglutamine proteins. This is DnaJ homolog subfamily B member 8 (DNAJB8) from Homo sapiens (Human).